Here is a 215-residue protein sequence, read N- to C-terminus: HTH-type transcriptional repressor FabR (215 aa).

Residues 10–70 form the HTH tetR-type domain; it reads KTRRSLVEAA…TMVDESGLML (61 aa). A DNA-binding region (H-T-H motif) is located at residues 33-52; that stretch reads SLREVAREAGIAPTSFYRHF.

In terms of assembly, homodimer.

It localises to the cytoplasm. Functionally, represses the transcription of fabB, involved in unsaturated fatty acid (UFA) biosynthesis. By controlling UFA production, FabR directly influences the physical properties of the membrane bilayer. This Shigella boydii serotype 18 (strain CDC 3083-94 / BS512) protein is HTH-type transcriptional repressor FabR.